The chain runs to 410 residues: MSYQELDPIVWSAIQQESARQNRTIELIASENFTSQAVRAAQGSVLTNKYAEGYPYKRYYGGTEYVDVVEQVAIDRLKELFGAEYANVQPHSGSQANAAAYMAFLKPGDKILGMSLDAGGHLTHGAKVSFSGKVYESHTYGLNSETETLDYEAIAKQAREVKPQMIVAGASAYSRIIEFDKFRAIADEVGAYLMVDMAHIAGLVAAGLHPNPVGIADVVTSTTHKTLRGPRGGVILSQEKYAKQLNSAIFPGSQGGPLEHIIAGKAIAFGEALQPKFKDYAQQVIKNAQAMAKVFNDTEDIRVVAGGTDNHLFNLDLTKTALNGKQTQELLDTVSITTNKEALPNEQLSPFVTSGIRIGTAAITTRGFDEDDATNVAELIVTAIHHYDDEKVLKQVKREAEALAMTHLFE.

Residues Leu116 and 120–122 (GHL) contribute to the (6S)-5,6,7,8-tetrahydrofolate site. Residue Lys225 is modified to N6-(pyridoxal phosphate)lysine. 349 to 351 (SPF) is a (6S)-5,6,7,8-tetrahydrofolate binding site.

It belongs to the SHMT family. As to quaternary structure, homodimer. Pyridoxal 5'-phosphate is required as a cofactor.

The protein resides in the cytoplasm. It catalyses the reaction (6R)-5,10-methylene-5,6,7,8-tetrahydrofolate + glycine + H2O = (6S)-5,6,7,8-tetrahydrofolate + L-serine. Its pathway is one-carbon metabolism; tetrahydrofolate interconversion. The protein operates within amino-acid biosynthesis; glycine biosynthesis; glycine from L-serine: step 1/1. Its function is as follows. Catalyzes the reversible interconversion of serine and glycine with tetrahydrofolate (THF) serving as the one-carbon carrier. This reaction serves as the major source of one-carbon groups required for the biosynthesis of purines, thymidylate, methionine, and other important biomolecules. Also exhibits THF-independent aldolase activity toward beta-hydroxyamino acids, producing glycine and aldehydes, via a retro-aldol mechanism. The chain is Serine hydroxymethyltransferase from Leuconostoc mesenteroides subsp. mesenteroides (strain ATCC 8293 / DSM 20343 / BCRC 11652 / CCM 1803 / JCM 6124 / NCDO 523 / NBRC 100496 / NCIMB 8023 / NCTC 12954 / NRRL B-1118 / 37Y).